The chain runs to 350 residues: MATHYLSPSILCIILTTLVSIAGAKIPAIIVFGDSSVDSGNNNFISTMARANFEPYGRDFPGGRATGRFCNGRLSSDFTSEAYGLKPTVPAYLDPSYNISDFATGVCFASAGTGYDNSTADVLGVIPLWKEVEYFKEYQSNLSAYLGHRRAAKIIRESLYIVSIGTNDFLENYYTLPDRRSQFSISQYQDFLVEIAEVFLKDIYRLGARKMSFTGISPMGCLPLERVTNLDDPFSCARSYNDLAVDFNGRLRRLVTKLNRELTGIKIYFANPYDIMWDIVTKPNLYGLEISSSACCGTGLFEMGFLCGQDNPLTCSDANKFVFWDAFHPTERTNQIVSDHFFKHLKNLFH.

The signal sequence occupies residues 1–24 (MATHYLSPSILCIILTTLVSIAGA). Serine 35 serves as the catalytic Nucleophile. 3 N-linked (GlcNAc...) asparagine glycosylation sites follow: asparagine 98, asparagine 117, and asparagine 141. Catalysis depends on residues aspartate 325 and histidine 328.

Belongs to the 'GDSL' lipolytic enzyme family.

It localises to the secreted. This Arabidopsis thaliana (Mouse-ear cress) protein is GDSL esterase/lipase At2g42990.